We begin with the raw amino-acid sequence, 238 residues long: Ribosomal RNA small subunit methyltransferase I (238 aa).

Belongs to the methyltransferase superfamily. RsmI family.

It localises to the cytoplasm. The enzyme catalyses cytidine(1402) in 16S rRNA + S-adenosyl-L-methionine = 2'-O-methylcytidine(1402) in 16S rRNA + S-adenosyl-L-homocysteine + H(+). Functionally, catalyzes the 2'-O-methylation of the ribose of cytidine 1402 (C1402) in 16S rRNA. This chain is Ribosomal RNA small subunit methyltransferase I, found in Mesomycoplasma conjunctivae (strain ATCC 25834 / NCTC 10147 / HRC/581) (Mycoplasma conjunctivae).